The primary structure comprises 213 residues: Cell wall protein PGA62 (213 aa).

Positions 1–18 are cleaved as a signal peptide; sequence MQFSSAVVLSAVAGSALA. N-linked (GlcNAc...) asparagine glycosylation occurs at Asn-22. Positions 120 to 194 are disordered; it reads CPLPSTEAPG…APAVSTAEAG (75 aa). A compositionally biased stretch (polar residues) spans 145-172; the sequence is PVPTTAAESSPAKTTAAESSPAQETTPK. Over residues 173–194 the composition is skewed to low complexity; the sequence is TVAAESSSAETTAPAVSTAEAG. Gly-194 carries the GPI-anchor amidated glycine lipid modification. A propeptide spans 195–213 (removed in mature form); the sequence is AAANAVPVAAGLLALAALF.

It belongs to the HWP1 family. In terms of processing, N- and O-glycosylated. The GPI-anchor is attached to the protein in the endoplasmic reticulum and serves to target the protein to the cell surface. There, the glucosamine-inositol phospholipid moiety is cleaved off and the GPI-modified mannoprotein is covalently attached via its lipidless GPI glycan remnant to the 1,6-beta-glucan of the outer cell wall layer.

The protein resides in the secreted. It is found in the cell wall. Its subcellular location is the membrane. Functionally, cell wall protein necessary for cell wall integrity. Plays only a minor role in hyphal morphogenesis and is not critical to biofilm formation. This is Cell wall protein PGA62 (PGA62) from Candida albicans (strain SC5314 / ATCC MYA-2876) (Yeast).